Consider the following 186-residue polypeptide: Translation initiation factor IF-3 (186 aa).

Belongs to the IF-3 family. Monomer.

The protein localises to the cytoplasm. Functionally, IF-3 binds to the 30S ribosomal subunit and shifts the equilibrium between 70S ribosomes and their 50S and 30S subunits in favor of the free subunits, thus enhancing the availability of 30S subunits on which protein synthesis initiation begins. This Chlamydia caviae (strain ATCC VR-813 / DSM 19441 / 03DC25 / GPIC) (Chlamydophila caviae) protein is Translation initiation factor IF-3.